The primary structure comprises 233 residues: Small ribosomal subunit protein uS2c (233 aa).

The protein belongs to the universal ribosomal protein uS2 family.

It is found in the plastid. It localises to the apicoplast. This chain is Small ribosomal subunit protein uS2c, found in Toxoplasma gondii.